The chain runs to 1673 residues: Protein TIC 214 (1673 aa).

6 helical membrane-spanning segments follow: residues Ile18 to Gly38, Phe67 to Leu87, Pro90 to His110, Leu127 to Leu147, Val175 to Ile195, and Ser218 to Gly238.

The protein belongs to the TIC214 family. As to quaternary structure, part of the Tic complex.

It is found in the plastid. It localises to the chloroplast inner membrane. Functionally, involved in protein precursor import into chloroplasts. May be part of an intermediate translocation complex acting as a protein-conducting channel at the inner envelope. This is Protein TIC 214 from Lactuca sativa (Garden lettuce).